Reading from the N-terminus, the 201-residue chain is Small ribosomal subunit protein uS4c (201 aa).

One can recognise an S4 RNA-binding domain in the interval 89–150 (MRLDNIVFRL…RQKSQAIITK (62 aa)).

It belongs to the universal ribosomal protein uS4 family. Part of the 30S ribosomal subunit. Contacts protein S5. The interaction surface between S4 and S5 is involved in control of translational fidelity.

It is found in the plastid. It localises to the chloroplast. In terms of biological role, one of the primary rRNA binding proteins, it binds directly to 16S rRNA where it nucleates assembly of the body of the 30S subunit. With S5 and S12 plays an important role in translational accuracy. The protein is Small ribosomal subunit protein uS4c (rps4) of Funaria hygrometrica (Moss).